We begin with the raw amino-acid sequence, 97 residues long: Secreted transmembrane peptide 4 (97 aa).

The N-terminal stretch at 1–33 (MTKNMTKKKMGLMSPNIAAFVLPMLLVLFTISS) is a signal peptide. Positions 54–67 (IVFTPPSSSCGGSP) match the SCOOP motif motif. The SxS motif essential for MIK2 binding signature appears at 60–62 (SSS). The tract at residues 75-97 (WMPRRPCRRTRPPGTNIPVSQSP) is disordered.

Belongs to the serine rich endogenous peptide (SCOOP) phytocytokine family. As to quaternary structure, interacts with MIK2 (via extracellular leucine-rich repeat domain); this interaction triggers the formation of complex between MIK2 and the BAK1/SERK3 and SERK4 coreceptors, and subsequent BAK1 activation by phosphorylation. In terms of tissue distribution, mostly expressed in leaves and stems, and, to a lower extent, in roots, siliques, seeds and flowers.

Its subcellular location is the cell membrane. The protein localises to the secreted. It localises to the extracellular space. The protein resides in the apoplast. Brassicaceae-specific phytocytokine (plant endogenous peptide released into the apoplast) perceived by MIK2 in a BAK1/SERK3 and SERK4 coreceptors-dependent manner, that modulates various physiological and antimicrobial processes including growth prevention and reactive oxygen species (ROS) response regulation. Prevents general growth and development. The sequence is that of Secreted transmembrane peptide 4 from Arabidopsis thaliana (Mouse-ear cress).